Consider the following 95-residue polypeptide: Protein ECS1 (95 aa).

The signal sequence occupies residues 1–27 (MASSIVSSMFLFLLLLLVFPHIDNVLG).

Expressed in leaves, flowers and stems, but not in roots.

Its subcellular location is the secreted. It localises to the cell wall. Its function is as follows. Maybe involved in defense responses to X.campestris, but probably not a X.campestris pv. campestris race 750 (e.g. Xcc750) resistance gene; according to genetic data, linked to a locus influencing resistance to Xcc750. The polypeptide is Protein ECS1 (Arabidopsis thaliana (Mouse-ear cress)).